The following is a 44-amino-acid chain: Photosystem II reaction center protein K (44 aa).

Residues 1-7 (MTTLLLA) constitute a propeptide that is removed on maturation. A helical membrane pass occupies residues 19–39 (IVDVLPVIPLLFLLLAFVWQA).

It belongs to the PsbK family. As to quaternary structure, PSII is composed of 1 copy each of membrane proteins PsbA, PsbB, PsbC, PsbD, PsbE, PsbF, PsbH, PsbI, PsbJ, PsbK, PsbL, PsbM, PsbT, PsbX, PsbY, PsbZ, Psb30/Ycf12, at least 3 peripheral proteins of the oxygen-evolving complex and a large number of cofactors. It forms dimeric complexes.

It localises to the plastid. The protein localises to the chloroplast thylakoid membrane. One of the components of the core complex of photosystem II (PSII). PSII is a light-driven water:plastoquinone oxidoreductase that uses light energy to abstract electrons from H(2)O, generating O(2) and a proton gradient subsequently used for ATP formation. It consists of a core antenna complex that captures photons, and an electron transfer chain that converts photonic excitation into a charge separation. This is Photosystem II reaction center protein K from Tupiella akineta (Green alga).